The following is a 269-amino-acid chain: Holocytochrome-c synthase (269 aa).

Residues 1 to 72 (MGWFWADQKT…ASKQPGQKMD (72 aa)) are disordered. HRM repeat units follow at residues 25–30 (GCPVMH) and 41–46 (ECPVMQ).

This sequence belongs to the cytochrome c-type heme lyase family.

It localises to the mitochondrion inner membrane. The protein localises to the mitochondrion intermembrane space. The enzyme catalyses holo-[cytochrome c] = apo-[cytochrome c] + heme b. Lyase that catalyzes the covalent linking of the heme group to the cytochrome C apoprotein to produce the mature functional cytochrome. This chain is Holocytochrome-c synthase (CYC3), found in Saccharomyces cerevisiae (strain ATCC 204508 / S288c) (Baker's yeast).